We begin with the raw amino-acid sequence, 246 residues long: 3-deoxy-manno-octulosonate cytidylyltransferase (246 aa).

This sequence belongs to the KdsB family. Homodimer.

It is found in the cytoplasm. It carries out the reaction 3-deoxy-alpha-D-manno-oct-2-ulosonate + CTP = CMP-3-deoxy-beta-D-manno-octulosonate + diphosphate. Its pathway is nucleotide-sugar biosynthesis; CMP-3-deoxy-D-manno-octulosonate biosynthesis; CMP-3-deoxy-D-manno-octulosonate from 3-deoxy-D-manno-octulosonate and CTP: step 1/1. It functions in the pathway bacterial outer membrane biogenesis; lipopolysaccharide biosynthesis. Its function is as follows. Activates KDO (a required 8-carbon sugar) for incorporation into bacterial lipopolysaccharide in Gram-negative bacteria. This chain is 3-deoxy-manno-octulosonate cytidylyltransferase (kpsU), found in Escherichia coli.